Here is a 188-residue protein sequence, read N- to C-terminus: Elongation factor P (188 aa).

Belongs to the elongation factor P family.

The protein resides in the cytoplasm. It functions in the pathway protein biosynthesis; polypeptide chain elongation. Functionally, involved in peptide bond synthesis. Stimulates efficient translation and peptide-bond synthesis on native or reconstituted 70S ribosomes in vitro. Probably functions indirectly by altering the affinity of the ribosome for aminoacyl-tRNA, thus increasing their reactivity as acceptors for peptidyl transferase. The polypeptide is Elongation factor P (Anaplasma marginale (strain St. Maries)).